We begin with the raw amino-acid sequence, 1169 residues long: MKNNIQNQCVPYNCLSNPEVEILSEERSTGRLPLDISLSLTRFLLSEFVPGVGVAFGLFDLIWGFITPSEWSLFLLQIEQLIEQRIETLERNRAITTLRGLADSYEVYLEALREWEENPNNAQLREDVRIRFANTDDALITAINNFTLTSFEIPLLSVYVQAANLHLSLLRDAVSFGQGWGLDIATVNNHYNRLINLIHRYTEHCLDTYNQGLENLRGTNTRQWSRFNQFRRELTLTVLDIVALFPNYDARAYPIQTSSQLTREIYTSSVIEDSPVSANIPNGFNRAEFGVRPPHLMDFMNSLFVTAETVRSQTVWGGHLVSSRNTAGNPINFPIYGVFNPGGAIWIADEDPRPFYRTLSDPVFVRGGFGNPHYVLGLRGVGFQQTGTNHTRTFRNSGTIDSLDEIPPQDNSGAPWNDYSHVLNHVTFVRWPGEIAGSDSWRAPMFSWTHRSADRTNIINPNIITQIPAVKAHNLHSGSTVVRGPGFTGGDLLRRTNTGTFADIRVNITGPLSQRYRVRIRYASTTDLQFFTRINGTSVNQGNFQRTMNRGGNLESGNFRTAGFSTPFSFSNAQSTFTLGTQAFSNQEVYIDRIEFVPAEVTFEAESDLERAQKAVNALFTSTSQLGLKTNVTGYHIDQVSNLVACLSDEFCLDEKRELSEKVKHAKRLSDKRNLLQDPNFRGINRQPDHGWRGSTDITIQGGDDVFKENYVTLPGTFDECYPTYLYQKIDESKLKAYTRYQLRGYIEDSQDLEIYLIRYNSKHEIVNVPGTGSLWPLSVENQIGPCGEPNRCAPHLEWNPDLHCSCRDGEKCVHHSHHFSLDIDVGCTDLNEDLGVWLIFKIKTQDGHARLGNLEFLEEEPLLGEALARVKRAEKKWRDKREKLQLETNIVYKEAKESVDALFVNSQYDRLQADTNIAMIHAADKRVHRIREAYLPELSVIPGVNAAIFEELEGRIFTAYSLYDARNVIKNGNFNNGLLCWNVKGHVDVEEQNNHRSVLVVPEWEAEVSQEVRVCPGRGYILRVTAYKEGYGEGCVTIHEVDNNTDELKFSSNCEKEQVYPGNTVACNDYNKNHGANACSSRNGGYDESYESNSSIPADYAPVYEEEAYTDGQRGNPCEFNRGHTPLPAGYVTAELEYFPETDTVWVEIGETEGTFIVDSVELLLMEE.

It belongs to the delta endotoxin family.

In terms of biological role, promotes colloidosmotic lysis by binding to the midgut epithelial cells of insects. In Bacillus thuringiensis subsp. morrisoni, this protein is Pesticidal crystal protein Cry1Fb (cry1Fb).